Here is a 95-residue protein sequence, read N- to C-terminus: Aspartyl/glutamyl-tRNA(Asn/Gln) amidotransferase subunit C (95 aa).

Belongs to the GatC family. Heterotrimer of A, B and C subunits.

It catalyses the reaction L-glutamyl-tRNA(Gln) + L-glutamine + ATP + H2O = L-glutaminyl-tRNA(Gln) + L-glutamate + ADP + phosphate + H(+). The enzyme catalyses L-aspartyl-tRNA(Asn) + L-glutamine + ATP + H2O = L-asparaginyl-tRNA(Asn) + L-glutamate + ADP + phosphate + 2 H(+). In terms of biological role, allows the formation of correctly charged Asn-tRNA(Asn) or Gln-tRNA(Gln) through the transamidation of misacylated Asp-tRNA(Asn) or Glu-tRNA(Gln) in organisms which lack either or both of asparaginyl-tRNA or glutaminyl-tRNA synthetases. The reaction takes place in the presence of glutamine and ATP through an activated phospho-Asp-tRNA(Asn) or phospho-Glu-tRNA(Gln). This Pseudomonas syringae pv. syringae (strain B728a) protein is Aspartyl/glutamyl-tRNA(Asn/Gln) amidotransferase subunit C.